The following is a 381-amino-acid chain: uncharacterized protein (381 aa).

Positions 331–340 (MQNGYANNGR) are enriched in polar residues. Positions 331-381 (MQNGYANNGRNHQRERFERPEKNSKKNKFLPFNGSNKEKKRDKLKKNCVIM) are disordered. The segment covering 342-354 (HQRERFERPEKNS) has biased composition (basic and acidic residues). Over residues 372 to 381 (DKLKKNCVIM) the composition is skewed to basic residues.

The protein resides in the cytoplasm. The protein localises to the nucleus. This is an uncharacterized protein from Saccharomyces cerevisiae (strain ATCC 204508 / S288c) (Baker's yeast).